The primary structure comprises 576 residues: Zinc finger protein 791 (576 aa).

The region spanning 4–90 is the KRAB domain; the sequence is VAFEDVSVSF…AENFSPNLSV (87 aa). 17 consecutive C2H2-type zinc fingers follow at residues 100-122, 132-154, 160-182, 188-210, 216-238, 244-266, 272-294, 300-322, 328-350, 356-378, 384-406, 412-434, 440-462, 468-490, 496-518, 524-546, and 552-574; these read YECTICGKAFMRLSSLTRHMRSH, YKCKECEKAFSYLKSFQRHERSH, YKCKQCGKTFIYHQPFQRHERTH, YECKQCGKALSCSSSLRVHERIH, YECKQCGKAFSCSSSIRVHERTH, YACKECGKAFISHTSVLTHMITH, YKCKECGKAFIFPSFLRVHERIH, YKCKQCGKAFRCSTSIQIHERIH, YKCKECGKSFSARPAFRVHVRVH, YKCKECGKAFSRISYFRIHERTH, YECKKCGKTFNYPLDLKIHKRNH, YECKECAKTFISLENFRRHMITH, YKCRDCGKVFIFPSALRTHERTH, YECKQCGKAFSCSSYIRIHKRTH, YECKECGKAFIYPTSFQGHMRMH, YKCKECGKAFSLHSSFQRHTRIH, and LECKQCGKAFSVSTSLKKHMRMH.

It belongs to the krueppel C2H2-type zinc-finger protein family.

It localises to the nucleus. Functionally, may be involved in transcriptional regulation. In Homo sapiens (Human), this protein is Zinc finger protein 791 (ZNF791).